The sequence spans 283 residues: Pantothenate synthetase (283 aa).

Residue 30–37 (MGNLHQGH) coordinates ATP. The active-site Proton donor is the H37. Position 61 (Q61) interacts with (R)-pantoate. Q61 is a binding site for beta-alanine. ATP is bound at residue 149 to 152 (GEKD). Residue Q155 participates in (R)-pantoate binding. ATP-binding positions include V178 and 186-189 (FSSR).

Belongs to the pantothenate synthetase family. In terms of assembly, homodimer.

It localises to the cytoplasm. It catalyses the reaction (R)-pantoate + beta-alanine + ATP = (R)-pantothenate + AMP + diphosphate + H(+). The protein operates within cofactor biosynthesis; (R)-pantothenate biosynthesis; (R)-pantothenate from (R)-pantoate and beta-alanine: step 1/1. Catalyzes the condensation of pantoate with beta-alanine in an ATP-dependent reaction via a pantoyl-adenylate intermediate. The chain is Pantothenate synthetase from Proteus mirabilis (strain HI4320).